The primary structure comprises 226 residues: Glycerol-3-phosphate acyltransferase (226 aa).

Transmembrane regions (helical) follow at residues 1–21 (MGLWLSLCGAVVVVAYLLGSF), 56–76 (GPGAFVLGLDCLKGVLAIALV), 102–122 (LVTLAGIAAILGHSKSIFLGF), 134–154 (ILLAMNWQVGLATFGVFAVVV), 159–178 (IVSLSSIMGAIAVSIVMVVL), and 182–197 (LPYILFGIAGGLYVIL).

It belongs to the PlsY family. As to quaternary structure, probably interacts with PlsX.

It localises to the cell inner membrane. It carries out the reaction an acyl phosphate + sn-glycerol 3-phosphate = a 1-acyl-sn-glycero-3-phosphate + phosphate. The protein operates within lipid metabolism; phospholipid metabolism. Its function is as follows. Catalyzes the transfer of an acyl group from acyl-phosphate (acyl-PO(4)) to glycerol-3-phosphate (G3P) to form lysophosphatidic acid (LPA). This enzyme utilizes acyl-phosphate as fatty acyl donor, but not acyl-CoA or acyl-ACP. This chain is Glycerol-3-phosphate acyltransferase, found in Trichormus variabilis (strain ATCC 29413 / PCC 7937) (Anabaena variabilis).